Consider the following 567-residue polypeptide: Wee1-like protein kinase 2 (567 aa).

Basic and acidic residues-rich tracts occupy residues 1 to 12 (MDDKDIDKELRQ), 25 to 35 (EGQKKVEESRE), 42 to 51 (EKGEVQDSEA), and 64 to 77 (HELDTSSEKDKESP). The tract at residues 1 to 117 (MDDKDIDKEL…DSPSTPKTML (117 aa)) is disordered. At serine 76 the chain carries Phosphoserine. The short motif at 173-175 (KRK) is the Nuclear localization signal element. Residues 212-486 (FLEVEKIGVG…AAALARNTVL (275 aa)) enclose the Protein kinase domain. ATP-binding positions include 218–226 (IGVGEFGTV) and lysine 241. Positions 315 to 329 (KLKDILLQISLGLNY) match the Nuclear export signal motif. Catalysis depends on aspartate 339, which acts as the Proton acceptor. Positions 344 and 380 each coordinate Mg(2+). Residues 494-519 (EELQQQLNLEKFKTATLERELREAQQ) are a coiled coil. The segment at 514–567 (LREAQQAQSPQGYTHHGDTGVSGTHTGSRSTKRLVGGKSARSSSFTSGEREPLH) is disordered.

Belongs to the protein kinase superfamily. Ser/Thr protein kinase family. WEE1 subfamily. Post-translationally, phosphorylated on serine residues. Phosphorylation leads to increase its activity. Expressed in oocytes (at protein level). May also be expressed in testis.

The protein resides in the nucleus. The enzyme catalyses L-tyrosyl-[protein] + ATP = O-phospho-L-tyrosyl-[protein] + ADP + H(+). Oocyte-specific protein tyrosine kinase that phosphorylates and inhibits CDK1/CDC2 and acts as a key regulator of meiosis during both prophase I and metaphase II. Required to maintain meiotic arrest in oocytes during the germinal vesicle (GV) stage, a long period of quiescence at dictyate prophase I, by phosphorylating CDK1 at 'Tyr-15', leading to inhibit CDK1 activity and prevent meiotic reentry. Also required for metaphase II exit during egg activation by phosphorylating CDK1 at 'Tyr-15', to ensure exit from meiosis in oocytes and promote pronuclear formation. This Homo sapiens (Human) protein is Wee1-like protein kinase 2 (WEE2).